Consider the following 210-residue polypeptide: Large ribosomal subunit protein uL3 (210 aa).

A disordered region spans residues 125-151; that stretch reads RHGQSRGPMSHGSRYHRRPGSMGPVAP.

This sequence belongs to the universal ribosomal protein uL3 family. As to quaternary structure, part of the 50S ribosomal subunit. Forms a cluster with proteins L14 and L19.

Functionally, one of the primary rRNA binding proteins, it binds directly near the 3'-end of the 23S rRNA, where it nucleates assembly of the 50S subunit. The protein is Large ribosomal subunit protein uL3 of Bacillus cereus (strain ATCC 14579 / DSM 31 / CCUG 7414 / JCM 2152 / NBRC 15305 / NCIMB 9373 / NCTC 2599 / NRRL B-3711).